The primary structure comprises 389 residues: Probable peptide chain release factor 1, mitochondrial (389 aa).

Residue glutamine 259 is modified to N5-methylglutamine.

This sequence belongs to the prokaryotic/mitochondrial release factor family. Post-translationally, methylation of glutamine in the GGQ triplet is conserved from bacteria to mammals.

It localises to the mitochondrion. In terms of biological role, mitochondrial peptide chain release factor that directs the termination of translation in response to the peptide chain termination codons UAA and UAG. The protein is Probable peptide chain release factor 1, mitochondrial of Caenorhabditis elegans.